A 418-amino-acid chain; its full sequence is Coenzyme A biosynthesis bifunctional protein CoaBC (418 aa).

The interval Met1 to Lys195 is phosphopantothenoylcysteine decarboxylase. The tract at residues Leu196–Ser418 is phosphopantothenate--cysteine ligase. CTP contacts are provided by Asp285, Lys295, Phe336, Lys354, and Lys358.

In the N-terminal section; belongs to the HFCD (homo-oligomeric flavin containing Cys decarboxylase) superfamily. This sequence in the C-terminal section; belongs to the PPC synthetase family. It depends on Mg(2+) as a cofactor. FMN is required as a cofactor.

It carries out the reaction N-[(R)-4-phosphopantothenoyl]-L-cysteine + H(+) = (R)-4'-phosphopantetheine + CO2. The enzyme catalyses (R)-4'-phosphopantothenate + L-cysteine + CTP = N-[(R)-4-phosphopantothenoyl]-L-cysteine + CMP + diphosphate + H(+). Its pathway is cofactor biosynthesis; coenzyme A biosynthesis; CoA from (R)-pantothenate: step 2/5. The protein operates within cofactor biosynthesis; coenzyme A biosynthesis; CoA from (R)-pantothenate: step 3/5. Catalyzes two sequential steps in the biosynthesis of coenzyme A. In the first step cysteine is conjugated to 4'-phosphopantothenate to form 4-phosphopantothenoylcysteine. In the second step the latter compound is decarboxylated to form 4'-phosphopantotheine. This chain is Coenzyme A biosynthesis bifunctional protein CoaBC, found in Mycobacterium bovis (strain ATCC BAA-935 / AF2122/97).